A 359-amino-acid chain; its full sequence is Thymidine kinase (359 aa).

17–24 lines the ATP pocket; it reads GAHGLGKT. Glu-45 (proton acceptor) is an active-site residue. Gln-99 contacts substrate. Arg-187 is an ATP binding site. Arg-193 contacts substrate.

Belongs to the herpesviridae thymidine kinase family. Homodimer.

It catalyses the reaction thymidine + ATP = dTMP + ADP + H(+). Its function is as follows. Catalyzes the transfer of the gamma-phospho group of ATP to thymidine to generate dTMP in the salvage pathway of pyrimidine synthesis. The dTMP serves as a substrate for DNA polymerase during viral DNA replication. Allows the virus to be reactivated and to grow in non-proliferative cells lacking a high concentration of phosphorylated nucleic acid precursors. The sequence is that of Thymidine kinase from Bos taurus (Bovine).